The following is a 492-amino-acid chain: Probable G-protein coupled receptor Mth-like 8 (492 aa).

An N-terminal signal peptide occupies residues 1–21; the sequence is MAQFCILGVLLILSGTHCSWG. Residues 22-218 are Extracellular-facing; sequence FHEETHYPCA…FVLGVREWTY (197 aa). Disulfide bonds link Cys30-Cys82, Cys84-Cys89, Cys93-Cys184, and Cys94-Cys107. N-linked (GlcNAc...) asparagine glycosylation is found at Asn37 and Asn51. N-linked (GlcNAc...) asparagine glycans are attached at residues Asn129, Asn169, and Asn192. A helical membrane pass occupies residues 219 to 239; it reads AICLLIAILSMFIVLMVYLMC. Residues 240-245 are Cytoplasmic-facing; that stretch reads SEMRNS. A helical transmembrane segment spans residues 246-266; sequence FYGVAIKAYAICMILGYALLA. The Extracellular portion of the chain corresponds to 267 to 282; that stretch reads YLTLHNPANLSNAACR. N-linked (GlcNAc...) asparagine glycosylation occurs at Asn275. Residues 283–303 form a helical membrane-spanning segment; it reads ILPSLALMNLVLSFYILSFIA. Over 304–317 the chain is Cytoplasmic; the sequence is FKLYLSFYGVVFTK. A helical transmembrane segment spans residues 318 to 338; sequence LMFWLIFTPIVLVAVGWSFFV. The Extracellular segment spans residues 339–362; it reads GFSYYGSRLIFGGDTCWFDPRNWS. Residue Asn360 is glycosylated (N-linked (GlcNAc...) asparagine). Residues 363–383 form a helical membrane-spanning segment; the sequence is VMIYFYAPVFVACAISGFFYV. At 384 to 411 the chain is on the cytoplasmic side; sequence LSQIYIRDQPDIETEKSFESIEKNRFKS. The helical transmembrane segment at 412–432 threads the bilayer; sequence FWKYFGYTAVVWVVCICSFAF. Topologically, residues 433 to 441 are extracellular; sequence NYYWENRSH. Residue Asn438 is glycosylated (N-linked (GlcNAc...) asparagine). A helical membrane pass occupies residues 442-462; it reads LNYAVSFCMAFHGFAALYALI. Over 463 to 492 the chain is Cytoplasmic; the sequence is GKNQQIQNFLRRIDNGEDTCENSVPLSSFG.

This sequence belongs to the G-protein coupled receptor 2 family. Mth subfamily.

The protein localises to the cell membrane. The polypeptide is Probable G-protein coupled receptor Mth-like 8 (mthl8) (Drosophila melanogaster (Fruit fly)).